Consider the following 363-residue polypeptide: MKIILSGGGTGGHIYPALALAEVIRKHEPDTEFLYVGSERGVESNIVPATGMPFEKLTVQGFKRSFSLENIKTVSLFLKAVKEAKKIIKDFDPDVVVGTGGYVSGAVVYAAQRLHIPTVIHEQNSVAGVTNKFLSRGATKIGVAFDAALSQFPKDKVFVVGNPRAQQVASIKSNFSWQQIGLSDEKPSLLIFGGSQGAPPINLAVIDAMQEFNKRNYQVVIVTGPKRYENVLDRLTTQPADNVRILPYIENMPEVLAKTSAIVSRAGATSIAEITALGIPSILVPSPYVTGDHQTKNAQSLVDAGAALMITEPALSGKALLLAADSLLLNESVSKTMTEQAKNVGIRDAGDRLYALILDAIGE.

UDP-N-acetyl-alpha-D-glucosamine-binding positions include 10–12, N124, S195, I249, and Q294; that span reads TGG.

This sequence belongs to the glycosyltransferase 28 family. MurG subfamily.

The protein resides in the cell membrane. The enzyme catalyses Mur2Ac(oyl-L-Ala-gamma-D-Glu-L-Lys-D-Ala-D-Ala)-di-trans,octa-cis-undecaprenyl diphosphate + UDP-N-acetyl-alpha-D-glucosamine = beta-D-GlcNAc-(1-&gt;4)-Mur2Ac(oyl-L-Ala-gamma-D-Glu-L-Lys-D-Ala-D-Ala)-di-trans,octa-cis-undecaprenyl diphosphate + UDP + H(+). The protein operates within cell wall biogenesis; peptidoglycan biosynthesis. In terms of biological role, cell wall formation. Catalyzes the transfer of a GlcNAc subunit on undecaprenyl-pyrophosphoryl-MurNAc-pentapeptide (lipid intermediate I) to form undecaprenyl-pyrophosphoryl-MurNAc-(pentapeptide)GlcNAc (lipid intermediate II). This is UDP-N-acetylglucosamine--N-acetylmuramyl-(pentapeptide) pyrophosphoryl-undecaprenol N-acetylglucosamine transferase from Leuconostoc mesenteroides subsp. mesenteroides (strain ATCC 8293 / DSM 20343 / BCRC 11652 / CCM 1803 / JCM 6124 / NCDO 523 / NBRC 100496 / NCIMB 8023 / NCTC 12954 / NRRL B-1118 / 37Y).